Here is an 84-residue protein sequence, read N- to C-terminus: Hirudin-HM2 (84 aa).

An N-terminal signal peptide occupies residues 1–20 (MFSLKLFVVFLAVCICVSQA). An interaction with thrombin active site region spans residues 21 to 23 (VSY). Cystine bridges form between C26/C34, C36/C48, and C42/C57. The segment at 53–84 (SGNQCVHGEGTPKPKSQTEGDFEEIPDEDILN) is disordered. Residue T63 is glycosylated (O-linked (GalNAc...) threonine). Residues 72-84 (GDFEEIPDEDILN) are compositionally biased toward acidic residues. Positions 73 to 84 (DFEEIPDEDILN) are interaction with fibrinogen-binding exosite of thrombin.

This sequence belongs to the protease inhibitor I14 (hirudin) family.

The protein resides in the secreted. In terms of biological role, hirudin is a potent thrombin-specific protease inhibitor. It forms a stable non-covalent complex with alpha-thrombin, thereby abolishing its ability to cleave fibrinogen. The protein is Hirudin-HM2 of Hirudinaria manillensis (Asian medical leech).